Reading from the N-terminus, the 88-residue chain is Small ribosomal subunit protein bS20 (88 aa).

The protein belongs to the bacterial ribosomal protein bS20 family.

Binds directly to 16S ribosomal RNA. This is Small ribosomal subunit protein bS20 from Rhodopseudomonas palustris (strain BisB18).